A 316-amino-acid chain; its full sequence is Probable porphobilinogen deaminase (316 aa).

S-(dipyrrolylmethanemethyl)cysteine is present on C234.

Belongs to the HMBS family. It depends on dipyrromethane as a cofactor.

The catalysed reaction is 4 porphobilinogen + H2O = hydroxymethylbilane + 4 NH4(+). It functions in the pathway porphyrin-containing compound metabolism; protoporphyrin-IX biosynthesis; coproporphyrinogen-III from 5-aminolevulinate: step 2/4. In terms of biological role, tetrapolymerization of the monopyrrole PBG into the hydroxymethylbilane pre-uroporphyrinogen in several discrete steps. The chain is Probable porphobilinogen deaminase from Methanosarcina mazei (strain ATCC BAA-159 / DSM 3647 / Goe1 / Go1 / JCM 11833 / OCM 88) (Methanosarcina frisia).